The sequence spans 158 residues: Troponin C, isoform 1 (158 aa).

The residue at position 1 (Ser-1) is an N-acetylserine. 4 EF-hand domains span residues 15 to 50 (EQIV…MGIK), 51 to 86 (VSST…FLIE), 91 to 126 (AMMK…LDAR), and 127 to 158 (LTAE…MMTG). Asp-64, Asp-66, Ser-68, Gln-70, and Glu-75 together coordinate Ca(2+). Ca(2+) is bound by residues Asp-140, Asp-142, Ser-144, Thr-146, and Glu-151.

This sequence belongs to the troponin C family.

Its function is as follows. Troponin is the central regulatory protein of striated muscle contraction. Tn consists of three components: Tn-I which is the inhibitor of actomyosin ATPase, Tn-T which contains the binding site for tropomyosin and Tn-C. The binding of calcium to Tn-C abolishes the inhibitory action of Tn on actin filaments. This Balanus nubilus (Giant acorn barnacle) protein is Troponin C, isoform 1.